Reading from the N-terminus, the 269-residue chain is Formamidopyrimidine-DNA glycosylase (269 aa).

Catalysis depends on Pro2, which acts as the Schiff-base intermediate with DNA. The active-site Proton donor is the Glu3. Lys57 functions as the Proton donor; for beta-elimination activity in the catalytic mechanism. DNA-binding residues include His90, Arg109, and Lys150. An FPG-type zinc finger spans residues 235–269; it reads QVYGKGGLPCPKCGTELAEVKIGQRATVYCSQCQQ. Residue Arg259 is the Proton donor; for delta-elimination activity of the active site.

It belongs to the FPG family. Monomer. Zn(2+) is required as a cofactor.

The catalysed reaction is Hydrolysis of DNA containing ring-opened 7-methylguanine residues, releasing 2,6-diamino-4-hydroxy-5-(N-methyl)formamidopyrimidine.. The enzyme catalyses 2'-deoxyribonucleotide-(2'-deoxyribose 5'-phosphate)-2'-deoxyribonucleotide-DNA = a 3'-end 2'-deoxyribonucleotide-(2,3-dehydro-2,3-deoxyribose 5'-phosphate)-DNA + a 5'-end 5'-phospho-2'-deoxyribonucleoside-DNA + H(+). In terms of biological role, involved in base excision repair of DNA damaged by oxidation or by mutagenic agents. Acts as a DNA glycosylase that recognizes and removes damaged bases. Has a preference for oxidized purines, such as 7,8-dihydro-8-oxoguanine (8-oxoG). Has AP (apurinic/apyrimidinic) lyase activity and introduces nicks in the DNA strand. Cleaves the DNA backbone by beta-delta elimination to generate a single-strand break at the site of the removed base with both 3'- and 5'-phosphates. The polypeptide is Formamidopyrimidine-DNA glycosylase (Photobacterium damsela subsp. piscicida (Pasteurella piscicida)).